Consider the following 193-residue polypeptide: Interleukin-23 subunit alpha (193 aa).

An N-terminal signal peptide occupies residues 1 to 22; it reads MLGSRAVMLMLLLLLLPWTSQG.

The protein belongs to the IL-6 superfamily. In terms of assembly, heterodimer with IL12B; disulfide-linked. The heterodimer is known as interleukin IL-23. Interacts with IL23R; this interaction enables recruitment of IL12RB1.

Its subcellular location is the secreted. Associates with IL12B to form the pro-inflammatory cytokine IL-23 that plays different roles in innate and adaptive immunity. Released by antigen-presenting cells such as dendritic cells or macrophages, binds to a heterodimeric receptor complex composed of IL12RB1 and IL23R to activate JAK2 and TYK2 which then phosphorylate the receptor to form a docking site leading to the phosphorylation of STAT3 and STAT4. This process leads to activation of several pathways including p38 MAPK or NF-kappa-B and promotes the production of pro-inflammatory cytokines such as interleukin-17A/IL17A. In turn, participates in the early and effective intracellular bacterial clearance. Promotes the expansion and survival of T-helper 17 cells, a CD4-positive helper T-cell subset that produces IL-17, as well as other IL-17-producing cells. The chain is Interleukin-23 subunit alpha (IL23A) from Sus scrofa (Pig).